Reading from the N-terminus, the 293-residue chain is Ribosomal protein L11 methyltransferase (293 aa).

S-adenosyl-L-methionine is bound by residues threonine 145, glycine 166, aspartate 188, and asparagine 230.

Belongs to the methyltransferase superfamily. PrmA family.

Its subcellular location is the cytoplasm. It catalyses the reaction L-lysyl-[protein] + 3 S-adenosyl-L-methionine = N(6),N(6),N(6)-trimethyl-L-lysyl-[protein] + 3 S-adenosyl-L-homocysteine + 3 H(+). In terms of biological role, methylates ribosomal protein L11. The polypeptide is Ribosomal protein L11 methyltransferase (Serratia proteamaculans (strain 568)).